Here is a 652-residue protein sequence, read N- to C-terminus: Probable potassium transport system protein Kup (652 aa).

Over residues 1–20 (MSNDTSPGTSSVDSKSSDPS) the composition is skewed to low complexity. Residues 1–26 (MSNDTSPGTSSVDSKSSDPSYGVPGH) are disordered. 12 consecutive transmembrane segments (helical) span residues 36-56 (LSLG…LYAL), 76-96 (LVSL…VMFI), 125-145 (WLIV…MITP), 161-181 (PSFD…LFCI), 193-213 (FGPI…FNII), 228-248 (AIHF…SVVL), 270-290 (LGWY…QCAL), 314-334 (LIIL…TGAF), 362-382 (IYIP…IAMF), 391-411 (AYGI…GVLV), 419-439 (AWQS…FFLS), and 444-464 (IPEG…MLMT).

The protein belongs to the HAK/KUP transporter (TC 2.A.72) family.

It is found in the cell inner membrane. It carries out the reaction K(+)(in) + H(+)(in) = K(+)(out) + H(+)(out). Functionally, transport of potassium into the cell. Likely operates as a K(+):H(+) symporter. This is Probable potassium transport system protein Kup from Zymomonas mobilis subsp. mobilis (strain ATCC 31821 / ZM4 / CP4).